A 167-amino-acid chain; its full sequence is Sperm acrosome membrane-associated protein 3 (167 aa).

Topologically, residues 1–63 (MVSALREAPL…EARSRALRRR (63 aa)) are cytoplasmic. A helical; Signal-anchor for type II membrane protein membrane pass occupies residues 64 to 84 (WCPAGIILLALISLLSCLLPA). Residues 85–167 (SEAKVYGRCE…VPNVCQMYCS (83 aa)) lie on the Extracellular side of the membrane. One can recognise a C-type lysozyme domain in the interval 88–167 (KVYGRCELAR…VPNVCQMYCS (80 aa)). A disulfide bridge links cysteine 151 with cysteine 166.

It belongs to the glycosyl hydrolase 22 family. Interacts with ASTL. In terms of processing, the processed form derives from the membrane form by proteolytic processing.

The protein localises to the cytoplasmic vesicle. It localises to the secretory vesicle. The protein resides in the acrosome membrane. Functionally, sperm surface membrane protein that may be involved in sperm-egg plasma membrane adhesion and fusion during fertilization. It could be a potential receptor for the egg oligosaccharide residue N-acetylglucosamine, which is present in the extracellular matrix over the egg plasma membrane. The processed form has no detectable bacteriolytic activity in vitro. The protein is Sperm acrosome membrane-associated protein 3 (SPACA3) of Pongo pygmaeus (Bornean orangutan).